The sequence spans 227 residues: 2-C-methyl-D-erythritol 4-phosphate cytidylyltransferase (227 aa).

The protein belongs to the IspD/TarI cytidylyltransferase family. IspD subfamily.

The enzyme catalyses 2-C-methyl-D-erythritol 4-phosphate + CTP + H(+) = 4-CDP-2-C-methyl-D-erythritol + diphosphate. Its pathway is isoprenoid biosynthesis; isopentenyl diphosphate biosynthesis via DXP pathway; isopentenyl diphosphate from 1-deoxy-D-xylulose 5-phosphate: step 2/6. Catalyzes the formation of 4-diphosphocytidyl-2-C-methyl-D-erythritol from CTP and 2-C-methyl-D-erythritol 4-phosphate (MEP). This Tolumonas auensis (strain DSM 9187 / NBRC 110442 / TA 4) protein is 2-C-methyl-D-erythritol 4-phosphate cytidylyltransferase.